Reading from the N-terminus, the 109-residue chain is Phosphoribosyl-ATP pyrophosphatase (109 aa).

Belongs to the PRA-PH family.

It localises to the cytoplasm. The catalysed reaction is 1-(5-phospho-beta-D-ribosyl)-ATP + H2O = 1-(5-phospho-beta-D-ribosyl)-5'-AMP + diphosphate + H(+). It functions in the pathway amino-acid biosynthesis; L-histidine biosynthesis; L-histidine from 5-phospho-alpha-D-ribose 1-diphosphate: step 2/9. The protein is Phosphoribosyl-ATP pyrophosphatase of Geobacter metallireducens (strain ATCC 53774 / DSM 7210 / GS-15).